The primary structure comprises 264 residues: 3-methyl-2-oxobutanoate hydroxymethyltransferase (264 aa).

2 residues coordinate Mg(2+): D45 and D84. Residues 45-46, D84, and K112 contribute to the 3-methyl-2-oxobutanoate site; that span reads DS. E114 is a Mg(2+) binding site. E181 functions as the Proton acceptor in the catalytic mechanism.

Belongs to the PanB family. As to quaternary structure, homodecamer; pentamer of dimers. Mg(2+) is required as a cofactor.

The protein localises to the cytoplasm. It carries out the reaction 3-methyl-2-oxobutanoate + (6R)-5,10-methylene-5,6,7,8-tetrahydrofolate + H2O = 2-dehydropantoate + (6S)-5,6,7,8-tetrahydrofolate. It functions in the pathway cofactor biosynthesis; (R)-pantothenate biosynthesis; (R)-pantoate from 3-methyl-2-oxobutanoate: step 1/2. Catalyzes the reversible reaction in which hydroxymethyl group from 5,10-methylenetetrahydrofolate is transferred onto alpha-ketoisovalerate to form ketopantoate. The protein is 3-methyl-2-oxobutanoate hydroxymethyltransferase of Pseudoalteromonas translucida (strain TAC 125).